Reading from the N-terminus, the 276-residue chain is Large ribosomal subunit protein uL2 (276 aa).

The interval 213 to 264 (WLGRRPHNRGVVMNPVDHPHGGGEGRTSGGRHPVTPWGKPTKGYKTRTNKRT) is disordered.

It belongs to the universal ribosomal protein uL2 family. Part of the 50S ribosomal subunit. Forms a bridge to the 30S subunit in the 70S ribosome.

One of the primary rRNA binding proteins. Required for association of the 30S and 50S subunits to form the 70S ribosome, for tRNA binding and peptide bond formation. It has been suggested to have peptidyltransferase activity; this is somewhat controversial. Makes several contacts with the 16S rRNA in the 70S ribosome. This Granulibacter bethesdensis (strain ATCC BAA-1260 / CGDNIH1) protein is Large ribosomal subunit protein uL2.